The following is a 234-amino-acid chain: Covalently-linked cell wall protein 14 (234 aa).

Residues 1 to 22 (MASFLKISTLIAIVSTLQTTLA) form the signal peptide. One can recognise a CFEM domain in the interval 23–109 (APPACLLACV…SSEESSASAS (87 aa)). 4 disulfide bridges follow: Cys27–Cys66, Cys31–Cys61, Cys41–Cys49, and Cys51–Cys82. Asp46 provides a ligand contact to heme. Positions 86-207 (SSQSSSSESE…ASSSESTTAT (122 aa)) are enriched in low complexity. The tract at residues 86–208 (SSQSSSSESE…SSSESTTATG (123 aa)) is disordered. Gly215 is lipidated: GPI-anchor amidated glycine. Positions 216–234 (SAAKVGLGALVGLVGAVLL) are cleaved as a propeptide — removed in mature form.

Belongs to the CCW14 family. The GPI-anchor is attached to the protein in the endoplasmic reticulum and serves to target the protein to the cell surface. There, the glucosamine-inositol phospholipid moiety is cleaved off and the GPI-modified mannoprotein is covalently attached via its lipidless GPI glycan remnant to the 1,6-beta-glucan of the outer cell wall layer.

It localises to the secreted. Its subcellular location is the cell wall. The protein localises to the membrane. Beta-glucan associated cell wall protein involved in cell wall structure. May serve as cross-linking or coat-forming wall protein. This Candida albicans (strain SC5314 / ATCC MYA-2876) (Yeast) protein is Covalently-linked cell wall protein 14 (SSR1).